Here is a 244-residue protein sequence, read N- to C-terminus: Small ribosomal subunit protein uS3 (244 aa).

The region spanning 39–107 (MRKFVMSELK…ETHLNIVEVR (69 aa)) is the KH type-2 domain. The tract at residues 214-244 (ASERRALEGDAQGPASRERDRGDRRRERDNA) is disordered. Positions 229 to 244 (SRERDRGDRRRERDNA) are enriched in basic and acidic residues.

Belongs to the universal ribosomal protein uS3 family. Part of the 30S ribosomal subunit. Forms a tight complex with proteins S10 and S14.

Its function is as follows. Binds the lower part of the 30S subunit head. Binds mRNA in the 70S ribosome, positioning it for translation. The chain is Small ribosomal subunit protein uS3 from Rhizobium etli (strain CIAT 652).